The primary structure comprises 629 residues: MASIPEKQALILPLFEKLTSLTKETPPRAQWDPRLAGVGVLPRGTLFSCFHEKHLLEATKLFKVLYSPESFNDFLQLAREARVVVNEGLFAYAFSVAVIHRDDCKGVTLPPIQEVFPDRFVPSETINLAMKEAKNDPNSDIVVDVQETGNILDPEYKLAYFREDIGANAHHWYWHVVYPANWDAVFTGKTKDRKGELFYYMHQQMCARYDCERLSNGLTRMIPFHNFKEKLEGYAPHLTSLVSGLHYASRPAGLCLRDLSELEVQDVERWRDRILDAYHLNHVHDRENNDVVLDAEHGADILGAIIESSSDSVNRRFYGSLHNWGHVMMARMTDPDRSFEENPGVMSDTSTSLRDPIFYRWHRFVDNIFQEYKATLPSYTADDLNFPGLRIVSVQVNAKSQNRVRTFLKQEELVLSHGINFGTEHTVKVHYNHLDHEPFSYTINVDNSSGAVKHATVRIFLGPKCDELGNILEPNEQRRLFIELDKFHKELGPGLNTINRNSVESNVTVAHTYTFDELREGKLAPEDATEYCNCGWPRHMLIPKGTHRGMEFQLFVMLTDYTVDNPCGGAGKIVCADAVSYCGAKDQKYPDTKPMGFPFDRPTKIHTAEEILTPNMSLTDVVIQYVGHE.

Histidine 171, histidine 175, histidine 202, histidine 322, histidine 326, and histidine 362 together coordinate Cu cation. Residues asparagine 447 and asparagine 506 are each glycosylated (N-linked (GlcNAc...) asparagine). A disulfide bridge connects residues cysteine 534 and cysteine 582. Asparagine 615 carries an N-linked (GlcNAc...) asparagine glycan.

This sequence belongs to the tyrosinase family. Hemocyanin subfamily. In terms of assembly, tarantula hemocyanin is a 24-chain polymer with seven different chains identified. Hemolymph.

It localises to the secreted. It is found in the extracellular space. Hemocyanins are copper-containing oxygen carriers occurring freely dissolved in the hemolymph of many mollusks and arthropods. This is Hemocyanin G chain (HCG) from Aphonopelma sp. (American tarantula).